Reading from the N-terminus, the 360-residue chain is MKALILVGGYGTRLRPLTLSTPKPLVDFCNKPILLHQVEALAAAGVDHVILAVSYMSQVLEKEMKAQEQRLGIRISMSHEEEPLGTAGPLALARDLLSETADPFFVLNSDVICDFPFQAMVQFHRHHGQEGSILVTKVEEPSKYGVVVCEADTGRIHRFVEKPQVFVSNKINAGMYILSPAVLQRIQLQPTSIEKEVFPIMAKEGQLYAMELQGFWMDIGQPKDFLTGMCLFLQSLRQKQPERLCSGPGIVGNVLVDPSARIGQNCSIGPNVSLGPGVVVEDGVCIRRCTVLRDARIRSHSWLESCIVGWRCRVGQWVRMENVTVLGEDVIVNDELYLNGASVLPHKSIGESVPEPRIIM.

Positions 2–222 are substrate-binding domain; it reads KALILVGGYG…QGFWMDIGQP (221 aa). D110 is a binding site for GDP-alpha-D-mannose. D110 is a binding site for Mg(2+). K162 is a catalytic residue. Residue D218 participates in GDP-alpha-D-mannose binding. Residue D218 coordinates Mg(2+). Residues 245 to 360 form a hexapeptide repeat domain region; the sequence is CSGPGIVGNV…ESVPEPRIIM (116 aa).

This sequence belongs to the transferase hexapeptide repeat family. In terms of assembly, component of the GMPPA-GMPPB mannose-1-phosphate guanylyltransferase complex composed of 4 GMPPA subunits and 8 GMPPB subunits; the complex is organized into three layers, a central layer made up of 2 GMPPA dimers sandwiched between two layers each made up of 2 GMPPB dimers. GMPPB catalytic activity is reduced when part of the complex and binding of GDP-alpha-D-Mannose by GMPPA induces allosteric feedback inhibition of GMPPB. Mg(2+) serves as cofactor. In terms of tissue distribution, ubiquitously expressed, including in brain and skeletal muscle. Weakly expressed with highest expression in skeletal muscle, brain and gonads.

The protein resides in the cytoplasm. It carries out the reaction alpha-D-mannose 1-phosphate + GTP + H(+) = GDP-alpha-D-mannose + diphosphate. The protein operates within nucleotide-sugar biosynthesis; GDP-alpha-D-mannose biosynthesis; GDP-alpha-D-mannose from alpha-D-mannose 1-phosphate (GTP route): step 1/1. Its activity is regulated as follows. Enzyme activity is reduced by incorporation into the GMPPA-GMPPB mannose-1-phosphate guanylyltransferase complex. Allosterically inhibited, when part of the GMPPA-GMPPB complex, by GDP-alpha-D-mannose binding to GMPPA. Its function is as follows. Catalytic subunit of the GMPPA-GMPPB mannose-1-phosphate guanylyltransferase complex. Catalyzes the formation of GDP-mannose, an essential precursor of glycan moieties of glycoproteins and glycolipids. Can catalyze the reverse reaction in vitro. Together with GMPPA regulates GDP-alpha-D-mannose levels. The protein is Mannose-1-phosphate guanylyltransferase catalytic subunit beta of Homo sapiens (Human).